The sequence spans 357 residues: Alanine racemase (357 aa).

Lys35 (proton acceptor; specific for D-alanine) is an active-site residue. Lys35 is subject to N6-(pyridoxal phosphate)lysine. Arg130 serves as a coordination point for substrate. Tyr253 functions as the Proton acceptor; specific for L-alanine in the catalytic mechanism. Met302 is a binding site for substrate.

Belongs to the alanine racemase family. The cofactor is pyridoxal 5'-phosphate.

It carries out the reaction L-alanine = D-alanine. It participates in amino-acid biosynthesis; D-alanine biosynthesis; D-alanine from L-alanine: step 1/1. Catalyzes the interconversion of L-alanine and D-alanine. May also act on other amino acids. This is Alanine racemase (alr) from Wigglesworthia glossinidia brevipalpis.